The primary structure comprises 48 residues: uncharacterized protein (48 aa).

It belongs to the ELIP/psbS family.

It is found in the plastid. Its subcellular location is the chloroplast. Functionally, possible role in chlorophyll and/or carotenoid binding. This is an uncharacterized protein from Porphyra purpurea (Red seaweed).